The primary structure comprises 208 residues: Uracil phosphoribosyltransferase (208 aa).

5-phospho-alpha-D-ribose 1-diphosphate is bound by residues Arg-78, Arg-103, and 130–138; that span reads DPMLATGGS. Uracil contacts are provided by residues Ile-193 and 198 to 200; that span reads GDA. Asp-199 is a binding site for 5-phospho-alpha-D-ribose 1-diphosphate.

It belongs to the UPRTase family. It depends on Mg(2+) as a cofactor.

It catalyses the reaction UMP + diphosphate = 5-phospho-alpha-D-ribose 1-diphosphate + uracil. It functions in the pathway pyrimidine metabolism; UMP biosynthesis via salvage pathway; UMP from uracil: step 1/1. With respect to regulation, allosterically activated by GTP. Functionally, catalyzes the conversion of uracil and 5-phospho-alpha-D-ribose 1-diphosphate (PRPP) to UMP and diphosphate. The sequence is that of Uracil phosphoribosyltransferase from Tolumonas auensis (strain DSM 9187 / NBRC 110442 / TA 4).